The sequence spans 407 residues: Histone acetyltransferase mst2 (407 aa).

An MYST-type HAT domain is found at 98-372; that stretch reads PQPTSIRYLY…VNPKLLRWTP (275 aa). The C2HC MYST-type zinc finger occupies 131–156; it reads LYICESCLKYMNSDHVLQRHKMKCSW. Lysine 198 is modified (N6-acetyllysine; by autocatalysis). Residues 241–243, threonine 243, and 248–254 each bind acetyl-CoA; these read ILT and QRRGYGV. Residue glutamate 274 is the Proton donor/acceptor of the active site. Acetyl-CoA is bound by residues serine 278 and serine 287.

The protein belongs to the MYST (SAS/MOZ) family. Component of the mst2 complex composed of at least eaf6, mst2, nto1, pdp3, ptf1, ptf2 and tfg3. In terms of processing, autoacetylation at Lys-198 is required for proper function.

It is found in the cytoplasm. The protein localises to the nucleus. The enzyme catalyses L-lysyl-[protein] + acetyl-CoA = N(6)-acetyl-L-lysyl-[protein] + CoA + H(+). In terms of biological role, component of the mst2 complex which is a highly specific H3 lysine 14 (H3K14) acetyltransferase that functions together with gcn5 to regulate global levels of H3K14 acetylation (H3K14ac), critical for DNA damage checkpoint activation. Negatively regulates telomere silencing. Telomere silencing is increased due to histone hypoacetylation and/or an increase in the ratio of methylated histones to acetylated histones. Telomeric histone acetylation contributes to normal meiotic progression. The polypeptide is Histone acetyltransferase mst2 (mst2) (Schizosaccharomyces pombe (strain 972 / ATCC 24843) (Fission yeast)).